We begin with the raw amino-acid sequence, 330 residues long: ADP-L-glycero-D-manno-heptose-6-epimerase (330 aa).

NADP(+) contacts are provided by residues 11 to 12, 32 to 33, lysine 39, lysine 54, 75 to 79, and asparagine 92; these read FI, DN, and EGACS. The active-site Proton acceptor is tyrosine 139. Residue lysine 143 participates in NADP(+) binding. Substrate is bound at residue asparagine 168. Valine 169 and lysine 177 together coordinate NADP(+). Residue lysine 177 is the Proton acceptor of the active site. Substrate contacts are provided by residues arginine 179, histidine 186, 200-203, arginine 213, and tyrosine 292; that span reads FGEY.

The protein belongs to the NAD(P)-dependent epimerase/dehydratase family. HldD subfamily. In terms of assembly, homopentamer. Requires NADP(+) as cofactor.

It catalyses the reaction ADP-D-glycero-beta-D-manno-heptose = ADP-L-glycero-beta-D-manno-heptose. The protein operates within nucleotide-sugar biosynthesis; ADP-L-glycero-beta-D-manno-heptose biosynthesis; ADP-L-glycero-beta-D-manno-heptose from D-glycero-beta-D-manno-heptose 7-phosphate: step 4/4. Catalyzes the interconversion between ADP-D-glycero-beta-D-manno-heptose and ADP-L-glycero-beta-D-manno-heptose via an epimerization at carbon 6 of the heptose. This chain is ADP-L-glycero-D-manno-heptose-6-epimerase, found in Burkholderia pseudomallei (strain K96243).